Here is a 246-residue protein sequence, read N- to C-terminus: tRNA pseudouridine synthase A (246 aa).

D53 (nucleophile) is an active-site residue. Y111 contributes to the substrate binding site.

The protein belongs to the tRNA pseudouridine synthase TruA family. In terms of assembly, homodimer.

It carries out the reaction uridine(38/39/40) in tRNA = pseudouridine(38/39/40) in tRNA. Functionally, formation of pseudouridine at positions 38, 39 and 40 in the anticodon stem and loop of transfer RNAs. The protein is tRNA pseudouridine synthase A of Anoxybacillus flavithermus (strain DSM 21510 / WK1).